A 228-amino-acid polypeptide reads, in one-letter code: MNRLKKLKKIRLHREGTSILIVSAILLIGINALLFWGIECKIPFYIFATASIVVYLLMVNFFRCPIRLFEHDTEKIVVAPADGRIVVIEEVDEHEYFHDRRLMISIFMSIVNVHANWYPVDGVVKHVDHHNGKFMKAWLPKASTENERSMVVIETPEGHTVMARQIAGAIARRIVTYAEVGEDCYIDEHMGFIKFGSRVDVYLPLGTEVCVKMGQATVGNETVIAKLK.

The active-site Schiff-base intermediate with substrate; via pyruvic acid is S197. S197 carries the pyruvic acid (Ser); by autocatalysis modification.

It belongs to the phosphatidylserine decarboxylase family. PSD-A subfamily. As to quaternary structure, heterodimer of a large membrane-associated beta subunit and a small pyruvoyl-containing alpha subunit. It depends on pyruvate as a cofactor. Post-translationally, is synthesized initially as an inactive proenzyme. Formation of the active enzyme involves a self-maturation process in which the active site pyruvoyl group is generated from an internal serine residue via an autocatalytic post-translational modification. Two non-identical subunits are generated from the proenzyme in this reaction, and the pyruvate is formed at the N-terminus of the alpha chain, which is derived from the carboxyl end of the proenzyme. The post-translation cleavage follows an unusual pathway, termed non-hydrolytic serinolysis, in which the side chain hydroxyl group of the serine supplies its oxygen atom to form the C-terminus of the beta chain, while the remainder of the serine residue undergoes an oxidative deamination to produce ammonia and the pyruvoyl prosthetic group on the alpha chain.

The protein localises to the cell membrane. The catalysed reaction is a 1,2-diacyl-sn-glycero-3-phospho-L-serine + H(+) = a 1,2-diacyl-sn-glycero-3-phosphoethanolamine + CO2. It participates in phospholipid metabolism; phosphatidylethanolamine biosynthesis; phosphatidylethanolamine from CDP-diacylglycerol: step 2/2. In terms of biological role, catalyzes the formation of phosphatidylethanolamine (PtdEtn) from phosphatidylserine (PtdSer). The polypeptide is Phosphatidylserine decarboxylase proenzyme (Phocaeicola vulgatus (strain ATCC 8482 / DSM 1447 / JCM 5826 / CCUG 4940 / NBRC 14291 / NCTC 11154) (Bacteroides vulgatus)).